Consider the following 319-residue polypeptide: Putative metal ion transporter YfjQ (319 aa).

Transmembrane regions (helical) follow at residues 254-274 (IMMT…IAGV) and 290-310 (GYFA…IWFV).

This sequence belongs to the CorA metal ion transporter (MIT) (TC 1.A.35) family.

It is found in the cell membrane. The sequence is that of Putative metal ion transporter YfjQ (yfjQ) from Bacillus subtilis (strain 168).